The chain runs to 550 residues: uncharacterized protein (550 aa).

Residues 1 to 13 (MAGALFEPSFAAA) form the signal peptide. The interval 312–358 (DAQPDPHLSGDEPPSRPLTPETTLFEALTPDPEPDPPATHAPAELIT) is disordered.

It to M.tuberculosis Rv3776.

This is an uncharacterized protein from Mycobacterium tuberculosis (strain CDC 1551 / Oshkosh).